The chain runs to 613 residues: Glutaminase 1 (613 aa).

Residues 33–315 form a glutaminase region; sequence GAVADYIPEL…LSSHYDLHML (283 aa). Serine 75, asparagine 124, glutamate 168, asparagine 175, tyrosine 199, tyrosine 251, and valine 269 together coordinate substrate. The STAS domain occupies 345-457; sequence REILAAHEQE…LDTAIEWAED (113 aa). 480 to 595 is an a nucleoside 3',5'-cyclic phosphate binding site; it reads LLEGLSADEL…ERIMRNLAQL (116 aa).

This sequence belongs to the glutaminase family. Homotetramer.

The enzyme catalyses L-glutamine + H2O = L-glutamate + NH4(+). The polypeptide is Glutaminase 1 (glsA1) (Bradyrhizobium diazoefficiens (strain JCM 10833 / BCRC 13528 / IAM 13628 / NBRC 14792 / USDA 110)).